A 258-amino-acid polypeptide reads, in one-letter code: MSEKLVAVDIGNTSVNIGIFEGEKLLANWHLGSVAQRMADEYASLLLGLLQHAGIHPEELNRVIMCSVVPPLTTTFEEVFKSYFKAAPLVVGAGIKSGVKVRMDNPREVGADRIVNAAAARVLYPGACIIVDMGTATTFDTLSEGGAYIGGAIAPGIATSAQAIAEKTSKLPKIEIIRPAKVIGSNTVSAMQSGIYFGYIGLVEELVRRIQTELGQKTRVVATGGYAALIAEGSRIFDIVRPDLTLQGLRIIYQMNQA.

9 to 16 (DIGNTSVN) is an ATP binding site. 110–113 (GADR) contacts substrate. The active-site Proton acceptor is aspartate 112. Aspartate 132 is a binding site for K(+). ATP is bound at residue threonine 135. Substrate is bound at residue threonine 187.

The protein belongs to the type III pantothenate kinase family. Homodimer. NH4(+) is required as a cofactor. The cofactor is K(+).

It is found in the cytoplasm. The catalysed reaction is (R)-pantothenate + ATP = (R)-4'-phosphopantothenate + ADP + H(+). It participates in cofactor biosynthesis; coenzyme A biosynthesis; CoA from (R)-pantothenate: step 1/5. Its function is as follows. Catalyzes the phosphorylation of pantothenate (Pan), the first step in CoA biosynthesis. The polypeptide is Type III pantothenate kinase (Dehalococcoides mccartyi (strain ATCC BAA-2266 / KCTC 15142 / 195) (Dehalococcoides ethenogenes (strain 195))).